A 101-amino-acid polypeptide reads, in one-letter code: YcgL domain-containing protein ABBFA_001807 (101 aa).

Residues 1–92 (MHCDIYRSSK…PPEGLINPNA (92 aa)) form the YcgL domain.

This is YcgL domain-containing protein ABBFA_001807 from Acinetobacter baumannii (strain AB307-0294).